Here is a 429-residue protein sequence, read N- to C-terminus: Glucan 1,3-beta-glucosidase (429 aa).

A signal peptide spans 1-19 (MLSMQVVSLISLLVSVCLA). Residues 20 to 27 (QPLPLSKR) constitute a propeptide that is removed on maturation. Catalysis depends on glutamate 215, which acts as the Proton donor. 2 cysteine pairs are disulfide-bonded: cysteine 299/cysteine 425 and cysteine 324/cysteine 354. The Nucleophile role is filled by glutamate 316.

This sequence belongs to the glycosyl hydrolase 5 (cellulase A) family.

Its subcellular location is the secreted. The enzyme catalyses Successive hydrolysis of beta-D-glucose units from the non-reducing ends of (1-&gt;3)-beta-D-glucans, releasing alpha-glucose.. In terms of biological role, beta-glucanases participate in the metabolism of beta-glucan, the main structural component of the cell wall. It could also function biosynthetically as a transglycosylase. This Kluyveromyces lactis (strain ATCC 8585 / CBS 2359 / DSM 70799 / NBRC 1267 / NRRL Y-1140 / WM37) (Yeast) protein is Glucan 1,3-beta-glucosidase.